A 667-amino-acid polypeptide reads, in one-letter code: DNA ligase (667 aa).

Residues 34-38 (DAEYD), 83-84 (SL), and Glu-113 contribute to the NAD(+) site. Lys-115 serves as the catalytic N6-AMP-lysine intermediate. The NAD(+) site is built by Arg-136, Glu-170, Lys-286, and Lys-310. 4 residues coordinate Zn(2+): Cys-404, Cys-407, Cys-422, and Cys-427. A BRCT domain is found at 589 to 667 (ATDSVLSGKT…EQQLEDVVGK (79 aa)).

It belongs to the NAD-dependent DNA ligase family. LigA subfamily. Mg(2+) serves as cofactor. Mn(2+) is required as a cofactor.

It catalyses the reaction NAD(+) + (deoxyribonucleotide)n-3'-hydroxyl + 5'-phospho-(deoxyribonucleotide)m = (deoxyribonucleotide)n+m + AMP + beta-nicotinamide D-nucleotide.. Functionally, DNA ligase that catalyzes the formation of phosphodiester linkages between 5'-phosphoryl and 3'-hydroxyl groups in double-stranded DNA using NAD as a coenzyme and as the energy source for the reaction. It is essential for DNA replication and repair of damaged DNA. The sequence is that of DNA ligase from Oceanobacillus iheyensis (strain DSM 14371 / CIP 107618 / JCM 11309 / KCTC 3954 / HTE831).